Reading from the N-terminus, the 329-residue chain is GMP reductase (329 aa).

Cys-178 serves as the catalytic Thioimidate intermediate. An NADP(+)-binding site is contributed by 207–230; sequence VIADGGIRTHGDIAKSIRMGATMV.

This sequence belongs to the IMPDH/GMPR family. GuaC type 2 subfamily.

It carries out the reaction IMP + NH4(+) + NADP(+) = GMP + NADPH + 2 H(+). Functionally, catalyzes the irreversible NADPH-dependent deamination of GMP to IMP. It functions in the conversion of nucleobase, nucleoside and nucleotide derivatives of G to A nucleotides, and in maintaining the intracellular balance of A and G nucleotides. In Lactococcus lactis subsp. lactis (strain IL1403) (Streptococcus lactis), this protein is GMP reductase.